Consider the following 223-residue polypeptide: Ribose-5-phosphate isomerase A (223 aa).

Substrate is bound by residues Thr-28–Thr-31, Asp-81–Asp-84, and Lys-94–Gly-97. Glu-103 (proton acceptor) is an active-site residue. Lys-121 is a binding site for substrate.

This sequence belongs to the ribose 5-phosphate isomerase family. In terms of assembly, homodimer.

It catalyses the reaction aldehydo-D-ribose 5-phosphate = D-ribulose 5-phosphate. It participates in carbohydrate degradation; pentose phosphate pathway; D-ribose 5-phosphate from D-ribulose 5-phosphate (non-oxidative stage): step 1/1. Catalyzes the reversible conversion of ribose-5-phosphate to ribulose 5-phosphate. The polypeptide is Ribose-5-phosphate isomerase A (Janthinobacterium sp. (strain Marseille) (Minibacterium massiliensis)).